A 252-amino-acid polypeptide reads, in one-letter code: tRNA pseudouridine synthase A (252 aa).

Catalysis depends on D51, which acts as the Nucleophile. Y105 lines the substrate pocket.

The protein belongs to the tRNA pseudouridine synthase TruA family.

The catalysed reaction is uridine(38/39/40) in tRNA = pseudouridine(38/39/40) in tRNA. Formation of pseudouridine at positions 38, 39 and 40 in the anticodon stem and loop of transfer RNAs. In Thermoplasma acidophilum (strain ATCC 25905 / DSM 1728 / JCM 9062 / NBRC 15155 / AMRC-C165), this protein is tRNA pseudouridine synthase A.